The following is a 359-amino-acid chain: 2-epi-5-epi-valiolone 7-kinase (359 aa).

A disordered region spans residues 28-48 (GGLGEVHTTPSPGHARRPGAG).

It belongs to the ROK (NagC/XylR) family.

The catalysed reaction is 2-epi-5-epi-valiolone + ATP = 2-epi-5-epi-valiolone 7-phosphate + ADP + H(+). In terms of biological role, catalyzes the conversion of 2-epi-5-epi-valiolone to 2-epi-5-epi-valiolone 7-phosphate. Involved in the biosynthesis of the acarviose moiety of the alpha-glucosidase inhibitor acarbose. The protein is 2-epi-5-epi-valiolone 7-kinase of Actinoplanes sp. (strain ATCC 31044 / CBS 674.73 / SE50/110).